The primary structure comprises 409 residues: Arginine deiminase (409 aa).

The active-site Amidino-cysteine intermediate is cysteine 399.

It belongs to the arginine deiminase family.

It localises to the cytoplasm. It carries out the reaction L-arginine + H2O = L-citrulline + NH4(+). It participates in amino-acid degradation; L-arginine degradation via ADI pathway; carbamoyl phosphate from L-arginine: step 1/2. The chain is Arginine deiminase from Borrelia duttonii (strain Ly).